The chain runs to 60 residues: Large ribosomal subunit protein bL32 (60 aa).

The disordered stretch occupies residues 1 to 23 (MAVPRNRHSNARKNIRRSHHAKK).

It belongs to the bacterial ribosomal protein bL32 family.

The protein is Large ribosomal subunit protein bL32 of Chlamydia caviae (strain ATCC VR-813 / DSM 19441 / 03DC25 / GPIC) (Chlamydophila caviae).